We begin with the raw amino-acid sequence, 167 residues long: Lipoprotein signal peptidase (167 aa).

Helical transmembrane passes span 8–28, 46–66, 68–88, and 101–121; these read TFLT…VVLL, WGHF…FGLF, QYKI…ALFL, and IALT…LLHG. Residues D125 and D143 contribute to the active site. A helical transmembrane segment spans residues 139-159; the sequence is FNLADAFISIGTLLLIGHLYF.

This sequence belongs to the peptidase A8 family.

The protein resides in the cell inner membrane. The enzyme catalyses Release of signal peptides from bacterial membrane prolipoproteins. Hydrolyzes -Xaa-Yaa-Zaa-|-(S,diacylglyceryl)Cys-, in which Xaa is hydrophobic (preferably Leu), and Yaa (Ala or Ser) and Zaa (Gly or Ala) have small, neutral side chains.. It participates in protein modification; lipoprotein biosynthesis (signal peptide cleavage). Functionally, this protein specifically catalyzes the removal of signal peptides from prolipoproteins. The polypeptide is Lipoprotein signal peptidase (Chlamydia trachomatis serovar L2 (strain ATCC VR-902B / DSM 19102 / 434/Bu)).